A 728-amino-acid polypeptide reads, in one-letter code: Beta-galactosidase 12 (728 aa).

Residues 1–27 (MGLNFREKAWILLGILCCSSLICSVKA) form the signal peptide. Catalysis depends on E185, which acts as the Proton donor. Residue E254 is the Nucleophile of the active site. 3 N-linked (GlcNAc...) asparagine glycosylation sites follow: N255, N380, and N450.

The protein belongs to the glycosyl hydrolase 35 family. In terms of tissue distribution, ubiquitous, with higher expression levels in roots and siliques.

Its subcellular location is the secreted. It is found in the extracellular space. It localises to the apoplast. The enzyme catalyses Hydrolysis of terminal non-reducing beta-D-galactose residues in beta-D-galactosides.. In Arabidopsis thaliana (Mouse-ear cress), this protein is Beta-galactosidase 12 (BGAL12).